The following is a 262-amino-acid chain: Short-chain reductase protein NovJ (262 aa).

NADP(+) is bound by residues 23-26 (GAGR) and 73-74 (DV). Serine 152 contributes to the substrate binding site. Tyrosine 164 acts as the Proton acceptor in catalysis. NADP(+) is bound at residue 164–168 (YATAK).

Belongs to the short-chain dehydrogenases/reductases (SDR) family. As to quaternary structure, heterotetramer; the NovJ(2)K(2) heterotetramer is composed of subunits of 2 NovJ and 2 subunits of NovK.

Its pathway is antibiotic biosynthesis; novobiocin biosynthesis. In terms of biological role, catalytic subunit of the NovJ(2)K(2) heterotetramer that catalyzes the NADPH-dependent reduction of the tyrosyl moiety of L-beta-OH-Tyr-S-NovH intermediate to yield the tethered beta-ketotyrosyl-S-NovH in the novobiocin biosynthesis pathway. Novobiocin is an aminocoumarin family antibiotic that targets bacterial DNA gyrases. This is Short-chain reductase protein NovJ (novJ) from Streptomyces niveus (Streptomyces spheroides).